Here is a 72-residue protein sequence, read N- to C-terminus: Translation initiation factor IF-1 (72 aa).

One can recognise an S1-like domain in the interval 1–72 (MSKDDCIEFE…TKGRIIYRMK (72 aa)).

This sequence belongs to the IF-1 family. In terms of assembly, component of the 30S ribosomal translation pre-initiation complex which assembles on the 30S ribosome in the order IF-2 and IF-3, IF-1 and N-formylmethionyl-tRNA(fMet); mRNA recruitment can occur at any time during PIC assembly.

It is found in the cytoplasm. Functionally, one of the essential components for the initiation of protein synthesis. Stabilizes the binding of IF-2 and IF-3 on the 30S subunit to which N-formylmethionyl-tRNA(fMet) subsequently binds. Helps modulate mRNA selection, yielding the 30S pre-initiation complex (PIC). Upon addition of the 50S ribosomal subunit IF-1, IF-2 and IF-3 are released leaving the mature 70S translation initiation complex. This is Translation initiation factor IF-1 from Xylella fastidiosa (strain Temecula1 / ATCC 700964).